The following is a 656-amino-acid chain: Threonine--tRNA ligase (656 aa).

The TGS domain occupies 1–64 (MAEAASLTFP…ERSGKIEIIT (64 aa)). Residues 246 to 548 (DHRRLGREMD…LIENYAGHFP (303 aa)) form a catalytic region. The Zn(2+) site is built by Cys-342, His-393, and His-525.

It belongs to the class-II aminoacyl-tRNA synthetase family. As to quaternary structure, homodimer. Requires Zn(2+) as cofactor.

The protein localises to the cytoplasm. The catalysed reaction is tRNA(Thr) + L-threonine + ATP = L-threonyl-tRNA(Thr) + AMP + diphosphate + H(+). Functionally, catalyzes the attachment of threonine to tRNA(Thr) in a two-step reaction: L-threonine is first activated by ATP to form Thr-AMP and then transferred to the acceptor end of tRNA(Thr). Also edits incorrectly charged L-seryl-tRNA(Thr). The chain is Threonine--tRNA ligase from Chelativorans sp. (strain BNC1).